Reading from the N-terminus, the 307-residue chain is Aspartate carbamoyltransferase catalytic subunit (307 aa).

Carbamoyl phosphate-binding residues include R55 and T56. K85 is a binding site for L-aspartate. Carbamoyl phosphate contacts are provided by R106, H134, and Q137. R167 and R228 together coordinate L-aspartate. L266 and P267 together coordinate carbamoyl phosphate.

The protein belongs to the aspartate/ornithine carbamoyltransferase superfamily. ATCase family. Heterododecamer (2C3:3R2) of six catalytic PyrB chains organized as two trimers (C3), and six regulatory PyrI chains organized as three dimers (R2).

It carries out the reaction carbamoyl phosphate + L-aspartate = N-carbamoyl-L-aspartate + phosphate + H(+). The protein operates within pyrimidine metabolism; UMP biosynthesis via de novo pathway; (S)-dihydroorotate from bicarbonate: step 2/3. Its function is as follows. Catalyzes the condensation of carbamoyl phosphate and aspartate to form carbamoyl aspartate and inorganic phosphate, the committed step in the de novo pyrimidine nucleotide biosynthesis pathway. In Tolumonas auensis (strain DSM 9187 / NBRC 110442 / TA 4), this protein is Aspartate carbamoyltransferase catalytic subunit.